Reading from the N-terminus, the 352-residue chain is DNA polymerase IV (352 aa).

Residues 6 to 186 (IIHIDMDAFY…LPLGKIPGAG (181 aa)) form the UmuC domain. Mg(2+) contacts are provided by Asp-10 and Asp-104. Glu-105 is an active-site residue.

Belongs to the DNA polymerase type-Y family. As to quaternary structure, monomer. It depends on Mg(2+) as a cofactor.

The protein localises to the cytoplasm. The enzyme catalyses DNA(n) + a 2'-deoxyribonucleoside 5'-triphosphate = DNA(n+1) + diphosphate. Poorly processive, error-prone DNA polymerase involved in untargeted mutagenesis. Copies undamaged DNA at stalled replication forks, which arise in vivo from mismatched or misaligned primer ends. These misaligned primers can be extended by PolIV. Exhibits no 3'-5' exonuclease (proofreading) activity. May be involved in translesional synthesis, in conjunction with the beta clamp from PolIII. This Neisseria gonorrhoeae (strain ATCC 700825 / FA 1090) protein is DNA polymerase IV.